The sequence spans 739 residues: Potassium transporter 26 (739 aa).

Residues 1–81 are Cytoplasmic-facing; sequence MEYHHRPHSP…RQVALLSFQS (81 aa). A helical transmembrane segment spans residues 82-102; it reads LGVVYGDLGTSPLYVFSSISL. The Extracellular portion of the chain corresponds to 103–112; that stretch reads DDPGEADFVG. Residues 113–133 form a helical membrane-spanning segment; it reads ILSIILWTFTMICLVKYVFIV. Over 134–198 the chain is Cytoplasmic; that stretch reads LKADDHGEGG…KFLEQSTKWQ (65 aa). Residues 199–219 form a helical membrane-spanning segment; sequence AVITYIVLAGTCMVLGDGALT. The Extracellular portion of the chain corresponds to 220–236; that stretch reads PAISVLSAVQGIQSRSS. Residues 237-257 form a helical membrane-spanning segment; it reads SITQAHVVLLSVIILFILFFF. The Cytoplasmic segment spans residues 258–268; that stretch reads QKHGTSKVSFT. A helical transmembrane segment spans residues 269–289; that stretch reads FSPIMILWFTFVAFIGLYNII. At 290–318 the chain is on the extracellular side; the sequence is KHYPPILKAVSPHYIIIYFIRNKRAAWET. Residues 319 to 339 traverse the membrane as a helical segment; that stretch reads LGAIVLCITGAEAMFADLGHF. Residues 340–347 are Cytoplasmic-facing; that stretch reads NKSSIQMA. A helical transmembrane segment spans residues 348 to 368; it reads FSVIVYPSMILAYAGQAAFLV. Residues 369–385 are Extracellular-facing; it reads KNPSKLSTTFYSSTPEP. Residues 386 to 406 form a helical membrane-spanning segment; it reads LFWPMFIIATLAAIVASQALI. The Cytoplasmic portion of the chain corresponds to 407-437; that stretch reads SASFSIIRQSIALGCFPRVTMKHTSGKHEGQ. Residues 438–458 traverse the membrane as a helical segment; it reads VYSPEINYFLMVACILITVGF. Residues 459–469 lie on the Extracellular side of the membrane; it reads KGGPEIGQAFG. Residues 470 to 490 traverse the membrane as a helical segment; sequence VAVIFVMLFTTNLMTVVMLII. At 491-494 the chain is on the cytoplasmic side; sequence WESN. Residues 495–515 form a helical membrane-spanning segment; that stretch reads IALASLFFVFFFSIEGIYMTS. Residues 516-519 are Extracellular-facing; that stretch reads LMNK. The helical transmembrane segment at 520-540 threads the bilayer; sequence ILQGGWVPFAITAFFLIITLS. Residues 541 to 739 are Cytoplasmic-facing; it reads WTYGRSKKGE…TLQVGMLYEI (199 aa).

Belongs to the HAK/KUP transporter (TC 2.A.72.3) family.

It is found in the membrane. In terms of biological role, high-affinity potassium transporter. The polypeptide is Potassium transporter 26 (HAK26) (Oryza sativa subsp. japonica (Rice)).